The sequence spans 945 residues: Netrin receptor UNC5B (945 aa).

The signal sequence occupies residues Met1–Ala26. Residues Gly27–Tyr377 lie on the Extracellular side of the membrane. One can recognise an Ig-like domain in the interval Pro48–Tyr145. Intrachain disulfides connect Cys69/Cys130, Cys81/Cys128, Cys174/Cys225, Cys258/Cys295, Cys262/Cys299, Cys273/Cys285, Cys314/Cys348, Cys318/Cys353, and Cys326/Cys338. The Ig-like C2-type domain maps to Lys153 to Ile242. N-linked (GlcNAc...) asparagine glycosylation is present at Asn222. TSP type-1 domains lie at Asn246–Pro300 and Asp302–Val354. N-linked (GlcNAc...) asparagine glycosylation is present at Asn347. The helical transmembrane segment at Ala378–Val398 threads the bilayer. The Cytoplasmic portion of the chain corresponds to Tyr399–Cys945. Cys403 carries the S-palmitoyl cysteine lipid modification. Residues Ser543–Ser686 form the ZU5 domain. The residue at position 581 (Tyr581) is a Phosphotyrosine. The tract at residues Arg689–Ala838 is UPA domain. Positions Ser707–Lys725 are interaction with DCC. A Death domain is found at Lys865–Gly943.

It belongs to the unc-5 family. As to quaternary structure, interacts with the cytoplasmic part of DCC. Interacts with GNAI2 via its cytoplasmic part. Interacts (via death domain) with DAPK1 (via death domain). Interacts (via extracellular domain) with FLRT2 and FLRT3 (via extracellular domain), but has higher affinity for FLRT3. Identified in a complex with FLRT3 and ADGRL3; does not interact with ADGRL3 by itself. Post-translationally, phosphorylated on cytoplasmic tyrosine residues. Palmitoylation is required for pro-apoptotic activity, but not for location at lipid rafts. In terms of processing, proteolytically cleaved by caspases during apoptosis. The cleavage does not take place when the receptor is associated with netrin ligand. Its cleavage by caspases is required to induce apoptosis. As to expression, highly expressed in brain. Expressed in lung during late development. Expressed during early blood vessel formation, in the semicircular canal and in a dorsal to ventral gradient in the retina.

Its subcellular location is the cell membrane. It localises to the membrane raft. Its function is as follows. Receptor for netrin required for axon guidance. Mediates axon repulsion of neuronal growth cones in the developing nervous system upon ligand binding. Axon repulsion in growth cones may be caused by its association with DCC that may trigger signaling for repulsion. Functions as a netrin receptor that negatively regulates vascular branching during angiogenesis. Mediates retraction of tip cell filopodia on endothelial growth cones in response to netrin. It also acts as a dependence receptor required for apoptosis induction when not associated with netrin ligand. Mediates apoptosis by activating DAPK1. In the absence of NTN1, activates DAPK1 by reducing its autoinhibitory phosphorylation at Ser-308 thereby increasing its catalytic activity. This Mus musculus (Mouse) protein is Netrin receptor UNC5B (Unc5b).